The following is a 341-amino-acid chain: Fructose-1,6-bisphosphatase, cytosolic (341 aa).

Positions 71, 100, 121, 123, and 124 each coordinate Mg(2+). Substrate is bound by residues 124–127 (DGSS), Asn-215, Tyr-247, Tyr-267, and Lys-277. Glu-283 contributes to the Mg(2+) binding site.

It belongs to the FBPase class 1 family. Requires Mg(2+) as cofactor.

It localises to the cytoplasm. The protein resides in the nucleus. It carries out the reaction beta-D-fructose 1,6-bisphosphate + H2O = beta-D-fructose 6-phosphate + phosphate. Catalyzes the first irreversible reaction from fructose-1,6-bisphosphate to fructose-6-phosphate and inorganic phosphate and plays an important regulatory role in sucrose biosynthesis and metabolism. Its activity is essential to regulate starch levels. Functions in fructose-mediated signaling independently of its catalytic activity in sugar metabolism. May act downstream of ABA2/GIN1, which is involved in abscisic acid (ABA) synthesis to regulate autotrophic transition and modulate early seedling establishment after seed germination. The chain is Fructose-1,6-bisphosphatase, cytosolic from Arabidopsis thaliana (Mouse-ear cress).